Here is a 133-residue protein sequence, read N- to C-terminus: Small ribosomal subunit protein uS8 (133 aa).

The protein belongs to the universal ribosomal protein uS8 family. As to quaternary structure, part of the 30S ribosomal subunit. Contacts proteins S5 and S12.

One of the primary rRNA binding proteins, it binds directly to 16S rRNA central domain where it helps coordinate assembly of the platform of the 30S subunit. This is Small ribosomal subunit protein uS8 from Chlamydia trachomatis serovar A (strain ATCC VR-571B / DSM 19440 / HAR-13).